Consider the following 80-residue polypeptide: uncharacterized protein (80 aa).

4Fe-4S ferredoxin-type domains are found at residues 21–49 and 50–80; these read KIIE…AIKN and NRVV…LYDA. Positions 30, 33, 36, 40, 60, 63, 66, and 70 each coordinate [4Fe-4S] cluster.

[4Fe-4S] cluster serves as cofactor.

This is an uncharacterized protein from Methanocaldococcus jannaschii (strain ATCC 43067 / DSM 2661 / JAL-1 / JCM 10045 / NBRC 100440) (Methanococcus jannaschii).